Consider the following 747-residue polypeptide: ATPase family gene 2 protein homolog B (747 aa).

M1 carries the N-acetylmethionine modification. ATP contacts are provided by residues 234–241 (GPPGVGKT) and 500–507 (GPPGCAKT).

The protein belongs to the AAA ATPase family. AFG2 subfamily. In terms of assembly, part of the 55LCC heterohexameric ATPase complex composed at least of AIRIM, AFG2A, AFG2B and CINP. Associates with pre-60S ribosomal particles. In terms of tissue distribution, expressed in neurons; also expressed at lower level in astrocytes, oligodendrocytes and microglia.

The protein localises to the cytoplasm. It localises to the cytoskeleton. It is found in the spindle. The protein resides in the nucleus. It carries out the reaction ATP + H2O = ADP + phosphate + H(+). With respect to regulation, in the context of 55LCC heterohexameric ATPase complex, the ATPase activity is stimulated by DNA binding and inhibited in presence of RNA. ATP-dependent chaperone part of the 55LCC heterohexameric ATPase complex which is chromatin-associated and promotes replisome proteostasis to maintain replication fork progression and genome stability. Required for replication fork progression, sister chromatid cohesion, and chromosome stability. The ATPase activity is specifically enhanced by replication fork DNA and is coupled to cysteine protease-dependent cleavage of replisome substrates in response to replication fork damage. Uses ATPase activity to process replisome substrates in S-phase, facilitating their proteolytic turnover from chromatin to ensure DNA replication and mitotic fidelity. Plays an essential role in the cytoplasmic maturation steps of pre-60S ribosomal particles by promoting the release of shuttling protein RSL24D1/RLP24 from the pre-ribosomal particles. The protein is ATPase family gene 2 protein homolog B (Afg2b) of Rattus norvegicus (Rat).